The sequence spans 327 residues: MFGKQDKMDVRCSTETEANRVSKNGHKEGKDSKGAEGNISTSFLKEQQGTFSASAATEDCNKSKSGSADPDYCRRILVRDAKGSIREIILPKGLDLDRPKRTRTSFTAEQLYRLEMEFQRCQYVVGRERTELARQLNLSETQVKVWFQNRRTKQKKDQGKDSELRSVVSETAATCSVLRLLEQGRLLSPPGLPGLLPPCASGALGSALRGPGLAAGSGTAAAAAAAAAAAPAGGSPHPPSAGTAAGPPPPAALHGAAAAAAGHGLFGLPVPTLLGSVAGRLSSAPLAVAGSLAGNLQELSARYLSSSAFEPYSRTNNKESAEKKALD.

A compositionally biased stretch (basic and acidic residues) spans 1-34 (MFGKQDKMDVRCSTETEANRVSKNGHKEGKDSKG). Positions 1–41 (MFGKQDKMDVRCSTETEANRVSKNGHKEGKDSKGAEGNIST) are disordered. Positions 99 to 158 (PKRTRTSFTAEQLYRLEMEFQRCQYVVGRERTELARQLNLSETQVKVWFQNRRTKQKKDQ) form a DNA-binding region, homeobox. Positions 230 to 245 (APAGGSPHPPSAGTAA) are enriched in low complexity. A disordered region spans residues 230-249 (APAGGSPHPPSAGTAAGPPP).

It belongs to the EMX homeobox family.

The protein localises to the nucleus. Its function is as follows. Transcription factor that plays a role in establishing dorsal-ventral polarity in the neural retina. This Gallus gallus (Chicken) protein is Ventral anterior homeobox 1 (VAX1).